Here is an 82-residue protein sequence, read N- to C-terminus: Nuclear protein 1 (82 aa).

The interval methionine 1 to arginine 82 is disordered. Over residues proline 17–aspartate 28 the composition is skewed to acidic residues. The Nuclear localization signal signature appears at lysine 65 to arginine 82.

It belongs to the NUPR family. Monomer. Directly interacts with MSL1 and binds MORF4L1, two components of histone acetyltransferase complex; the interaction with MORF4L1 may be mediated by MSL1. Interacts with EP300; this interaction enhances the effect of EP300 on PAX2 transcription factor activity. Interacts with PAXIP1; this interaction prevents PAXIP1 inhibition of PAX2 transcription factor activity. Interacts with COPS5; this interaction allows COPS5-dependent CDKN1B nuclear to cytoplasm translocation. Interacts with RNF2. Interacts with FOXO3; this interaction represses FOXO3 transactivation. Interacts with PTMA; negatively regulates apoptotic process. Interacts with MYOD1, EP300 and DDX5; this interaction coordinates the association of anti-proliferative and pro-myogenic proteins at the myogenin promoter. Interacts with TP53; interaction is stress-dependent. Forms a complex with EP300 and TP53; this complex binds CDKN1A promoter leading to transcriptional induction of CDKN1A. Phosphorylated in vitro by PKA and CK. Phosphorylation promotes DNA-binding activity. In terms of processing, acetylated by EP300 in vitro. Widely expressed, with high levels in liver, pancreas, prostate, ovary, colon, thyroid, spinal cord, trachea and adrenal gland, moderate levels in heart, placenta, lung, skeletal muscle, kidney, testis, small intestine, stomach and lymph node, and low levels in brain, spleen, thymus and bone marrow. Not detected in peripheral blood leukocytes.

Its subcellular location is the nucleus. The protein resides in the cytoplasm. The protein localises to the perinuclear region. Its function is as follows. Transcription regulator that converts stress signals into a program of gene expression that empowers cells with resistance to the stress induced by a change in their microenvironment. Thereby participates in the regulation of many processes namely cell-cycle, apoptosis, autophagy and DNA repair responses. Controls cell cycle progression and protects cells from genotoxic stress induced by doxorubicin through the complex formation with TP53 and EP300 that binds CDKN1A promoter leading to transcriptional induction of CDKN1A. Protects pancreatic cancer cells from stress-induced cell death by binding the RELB promoter and activating its transcription, leading to IER3 transactivation. Negatively regulates apoptosis through interaction with PTMA. Inhibits autophagy-induced apoptosis in cardiac cells through FOXO3 interaction, inducing cytoplasmic translocation of FOXO3 thereby preventing the FOXO3 association with the pro-autophagic BNIP3 promoter. Inhibits cell growth and facilitates programmed cell death by apoptosis after adriamycin-induced DNA damage through transactivation of TP53. Regulates methamphetamine-induced apoptosis and autophagy through DDIT3-mediated endoplasmic reticulum stress pathway. Participates in DNA repair following gamma-irradiation by facilitating DNA access of the transcription machinery through interaction with MSL1 leading to inhibition of histone H4' Lys-16' acetylation (H4K16ac). Coactivator of PAX2 transcription factor activity, both by recruiting EP300 to increase PAX2 transcription factor activity and by binding PAXIP1 to suppress PAXIP1-induced inhibition on PAX2. Positively regulates cell cycle progression through interaction with COPS5 inducing cytoplasmic translocation of CDKN1B leading to the CDKN1B degradation. Coordinates, through its interaction with EP300, the assiociation of MYOD1, EP300 and DDX5 to the MYOG promoter, leading to inhibition of cell-cycle progression and myogenic differentiation promotion. Negatively regulates beta cell proliferation via inhibition of cell-cycle regulatory genes expression through the suppression of their promoter activities. Also required for LHB expression and ovarian maturation. Exacerbates CNS inflammation and demyelination upon cuprizone treatment. This is Nuclear protein 1 from Homo sapiens (Human).